Here is a 290-residue protein sequence, read N- to C-terminus: Probable 2-(5''-triphosphoribosyl)-3'-dephosphocoenzyme-A synthase (290 aa).

The protein belongs to the CitG/MdcB family.

The enzyme catalyses 3'-dephospho-CoA + ATP = 2'-(5''-triphospho-alpha-D-ribosyl)-3'-dephospho-CoA + adenine. Its function is as follows. Involved in the formation of 2-(5''-phosphoribosyl)-3'-dephosphocoenzyme-A, the prosthetic group of the acyl-carrier protein of the malonate decarboxylase. The polypeptide is Probable 2-(5''-triphosphoribosyl)-3'-dephosphocoenzyme-A synthase (Pseudomonas fluorescens (strain Pf0-1)).